Here is a 360-residue protein sequence, read N- to C-terminus: Transcription factor MYB39 (360 aa).

2 consecutive HTH myb-type domains span residues 10 to 62 and 63 to 117; these read DKGV…MNYL and RPDI…RKKL. 2 DNA-binding regions (H-T-H motif) span residues 38-62 and 90-113; these read WRSL…MNYL and WSKI…NTHM. A disordered region spans residues 299-324; sequence PSTGSVSVSPETTSLNHPSTAQHSSG.

It localises to the nucleus. This Arabidopsis thaliana (Mouse-ear cress) protein is Transcription factor MYB39 (MYB39).